The following is a 164-amino-acid chain: Superoxide dismutase [Cu-Zn] 3 (164 aa).

Cu cation is bound by residues H51, H53, and H68. C62 and C151 are joined by a disulfide. Zn(2+) contacts are provided by H68, H76, H85, and D88. Position 125 (H125) interacts with Cu cation. A Peroxisome localization signal motif is present at residues 162–164; sequence AKL.

This sequence belongs to the Cu-Zn superoxide dismutase family. In terms of assembly, homodimer. Cu cation is required as a cofactor. Zn(2+) serves as cofactor. Expressed in leaves (at protein level).

It localises to the peroxisome. The enzyme catalyses 2 superoxide + 2 H(+) = H2O2 + O2. Functionally, destroys radicals which are normally produced within the cells and which are toxic to biological systems. This is Superoxide dismutase [Cu-Zn] 3 (CSD3) from Arabidopsis thaliana (Mouse-ear cress).